The following is a 267-amino-acid chain: Hydroxyethylthiazole kinase 2 (267 aa).

M41 lines the substrate pocket. Residues K116 and T166 each coordinate ATP. G193 provides a ligand contact to substrate.

It belongs to the Thz kinase family. Requires Mg(2+) as cofactor.

It catalyses the reaction 5-(2-hydroxyethyl)-4-methylthiazole + ATP = 4-methyl-5-(2-phosphooxyethyl)-thiazole + ADP + H(+). Its pathway is cofactor biosynthesis; thiamine diphosphate biosynthesis; 4-methyl-5-(2-phosphoethyl)-thiazole from 5-(2-hydroxyethyl)-4-methylthiazole: step 1/1. Its function is as follows. Catalyzes the phosphorylation of the hydroxyl group of 4-methyl-5-beta-hydroxyethylthiazole (THZ). The chain is Hydroxyethylthiazole kinase 2 from Streptococcus pneumoniae (strain JJA).